The following is a 440-amino-acid chain: Probable aldose 1-epimerase ARB_05372 (440 aa).

The first 24 residues, 1 to 24 (MCGVLRQLMLLLLAFLSITPSCSA), serve as a signal peptide directing secretion. 5 N-linked (GlcNAc...) asparagine glycosylation sites follow: Asn32, Asn38, Asn43, Asn68, and Asn112. Position 125–126 (125–126 (NR)) interacts with substrate. N-linked (GlcNAc...) asparagine glycans are attached at residues Asn129, Asn147, Asn163, Asn171, and Asn199. Residue His233 is the Proton donor of the active site. N-linked (GlcNAc...) asparagine glycans are attached at residues Asn243, Asn275, Asn281, and Asn306. Asp311 provides a ligand contact to substrate. N-linked (GlcNAc...) asparagine glycosylation is found at Asn321, Asn337, Asn365, and Asn385. The Proton acceptor role is filled by Glu401.

The protein belongs to the aldose epimerase family. Monomer.

The protein localises to the secreted. It carries out the reaction alpha-D-glucose = beta-D-glucose. The protein operates within carbohydrate metabolism; hexose metabolism. Functionally, mutarotase converts alpha-aldose to the beta-anomer. It is active on D-glucose, L-arabinose, D-xylose, D-galactose, maltose and lactose. The protein is Probable aldose 1-epimerase ARB_05372 of Arthroderma benhamiae (strain ATCC MYA-4681 / CBS 112371) (Trichophyton mentagrophytes).